A 460-amino-acid polypeptide reads, in one-letter code: 3-isopropylmalate dehydratase large subunit (460 aa).

Positions 341, 401, and 404 each coordinate [4Fe-4S] cluster.

Belongs to the aconitase/IPM isomerase family. LeuC type 1 subfamily. In terms of assembly, heterodimer of LeuC and LeuD. [4Fe-4S] cluster is required as a cofactor.

The enzyme catalyses (2R,3S)-3-isopropylmalate = (2S)-2-isopropylmalate. Its pathway is amino-acid biosynthesis; L-leucine biosynthesis; L-leucine from 3-methyl-2-oxobutanoate: step 2/4. Its function is as follows. Catalyzes the isomerization between 2-isopropylmalate and 3-isopropylmalate, via the formation of 2-isopropylmaleate. The protein is 3-isopropylmalate dehydratase large subunit of Phocaeicola vulgatus (strain ATCC 8482 / DSM 1447 / JCM 5826 / CCUG 4940 / NBRC 14291 / NCTC 11154) (Bacteroides vulgatus).